The sequence spans 985 residues: Thioredoxin domain-containing protein 11 (985 aa).

Positions 1-11 (MSECGGRGGGS) are enriched in gly residues. Residues 1 to 38 (MSECGGRGGGSSSSEDAEDEGGGGGGPAGSDCLSSSPT) form a disordered region. Residues 29-38 (GSDCLSSSPT) show a composition bias toward low complexity. The chain crosses the membrane as a helical span at residues 65 to 85 (LLCGAVALGCALLLALKFTCS). A Thioredoxin 1 domain is found at 92-214 (IPAKPPVSFF…IEKFVRRVMK (123 aa)). Disulfide bonds link cysteine 469/cysteine 472 and cysteine 719/cysteine 722. Residues 649–799 (LDPKQALMKL…LLRFILHHSD (151 aa)) enclose the Thioredoxin 2 domain. Residues 821–919 (VLQRGHISHL…ASENLLTENT (99 aa)) adopt a coiled-coil conformation. A Phosphoserine modification is found at serine 828. The disordered stretch occupies residues 935–985 (RDGAESLAAQREVHPKQPEPSATPQLPGSSPPPANVSATLVSERNKENRTD).

This sequence belongs to the protein disulfide isomerase family. As to quaternary structure, interacts with the cytoplasmic part of DUOX1 and DUOX2. Interacts with TPO and CYBA. In terms of tissue distribution, widely expressed at low level. Expressed at higher level in thyroid and prostate.

Its subcellular location is the endoplasmic reticulum membrane. Functionally, may act as a redox regulator involved in DUOX proteins folding. The interaction with DUOX1 and DUOX2 suggest that it belongs to a multiprotein complex constituting the thyroid H(2)O(2) generating system. It is however not sufficient to assist DUOX1 and DUOX2 in H(2)O(2) generation. This chain is Thioredoxin domain-containing protein 11 (TXNDC11), found in Homo sapiens (Human).